Here is a 538-residue protein sequence, read N- to C-terminus: NADH-quinone oxidoreductase subunit N (538 aa).

A run of 14 helical transmembrane segments spans residues 12-32 (IAYG…VSVL), 47-67 (LALA…LSGS), 81-101 (PTLY…VVMA), 144-164 (GITQ…MMLF), 170-190 (LLTM…MCAL), 205-225 (YFLL…FVYG), 248-268 (FLLL…GAVP), 294-314 (IAAF…ITTD), 317-337 (PVLW…AVTQ), 343-363 (MLAY…AAAN), 371-391 (LFYL…AGLV), 423-443 (APVL…IPLT), 472-492 (SAIA…ADPV), and 502-522 (GPAV…LGVA).

It belongs to the complex I subunit 2 family. In terms of assembly, NDH-1 is composed of 14 different subunits. Subunits NuoA, H, J, K, L, M, N constitute the membrane sector of the complex.

It localises to the cell membrane. It carries out the reaction a quinone + NADH + 5 H(+)(in) = a quinol + NAD(+) + 4 H(+)(out). Functionally, NDH-1 shuttles electrons from NADH, via FMN and iron-sulfur (Fe-S) centers, to quinones in the respiratory chain. The immediate electron acceptor for the enzyme in this species is believed to be a menaquinone. Couples the redox reaction to proton translocation (for every two electrons transferred, four hydrogen ions are translocated across the cytoplasmic membrane), and thus conserves the redox energy in a proton gradient. The protein is NADH-quinone oxidoreductase subunit N of Mycobacteroides abscessus (strain ATCC 19977 / DSM 44196 / CCUG 20993 / CIP 104536 / JCM 13569 / NCTC 13031 / TMC 1543 / L948) (Mycobacterium abscessus).